A 220-amino-acid chain; its full sequence is Ribosomal RNA large subunit methyltransferase E (220 aa).

Glycine 60, tryptophan 62, aspartate 92, aspartate 108, and aspartate 133 together coordinate S-adenosyl-L-methionine. Catalysis depends on lysine 173, which acts as the Proton acceptor.

It belongs to the class I-like SAM-binding methyltransferase superfamily. RNA methyltransferase RlmE family.

Its subcellular location is the cytoplasm. It catalyses the reaction uridine(2552) in 23S rRNA + S-adenosyl-L-methionine = 2'-O-methyluridine(2552) in 23S rRNA + S-adenosyl-L-homocysteine + H(+). In terms of biological role, specifically methylates the uridine in position 2552 of 23S rRNA at the 2'-O position of the ribose in the fully assembled 50S ribosomal subunit. The protein is Ribosomal RNA large subunit methyltransferase E of Paraburkholderia phymatum (strain DSM 17167 / CIP 108236 / LMG 21445 / STM815) (Burkholderia phymatum).